The chain runs to 304 residues: N-acetylglucosaminyl-phosphatidylinositol de-N-acetylase (304 aa).

At 1–20 (MKMLRRTKVNFSKLLYKITK) the chain is on the lumenal side. A helical membrane pass occupies residues 21–38 (LAIVLTILYIYFTPKIVS). Residues 39–304 (RNNASLQHIF…FVNEFDVYTY (266 aa)) lie on the Cytoplasmic side of the membrane.

This sequence belongs to the PIGL family.

Its subcellular location is the endoplasmic reticulum membrane. It catalyses the reaction a 6-(N-acetyl-alpha-D-glucosaminyl)-1-(1,2-diacyl-sn-glycero-3-phospho)-1D-myo-inositol + H2O = a 6-(alpha-D-glucosaminyl)-1-(1,2-diacyl-sn-glycero-3-phospho)-1D-myo-inositol + acetate. It functions in the pathway glycolipid biosynthesis; glycosylphosphatidylinositol-anchor biosynthesis. Its function is as follows. Involved in the second step of GPI biosynthesis. De-N-acetylation of N-acetylglucosaminyl-phosphatidylinositol. This is N-acetylglucosaminyl-phosphatidylinositol de-N-acetylase (GPI12) from Saccharomyces cerevisiae (strain ATCC 204508 / S288c) (Baker's yeast).